We begin with the raw amino-acid sequence, 147 residues long: Chorion class B protein B.L1 (147 aa).

A left arm region spans residues 1–38; sequence IGCGRGCGGRGYGGLGYGGLGYGGLGYGGLGGGCGRGF. 4 repeat units span residues 11-15, 16-20, 21-25, and 26-30. Residues 11–30 are 4 X 5 AA tandem repeats of G-Y-G-G-L; sequence GYGGLGYGGLGYGGLGYGGL. Positions 39–107 are central domain; it reads SGGGLPVATA…GNGAVGITRE (69 aa). The tract at residues 108–147 is right arm (Gly-rich tandem repeats); sequence GGLGYGAGYGGGYGLGYGGYGGGYGLGYGGYGGCGCGCGY.

This sequence belongs to the chorion protein family.

Its function is as follows. This protein is one of many from the eggshell of the silk moth. This Bombyx mori (Silk moth) protein is Chorion class B protein B.L1.